Here is a 1030-residue protein sequence, read N- to C-terminus: MEGPPTAAHAAAPLRTAVFLALAASWQQPAVAVGNWNCARSTDDKQWECVAKRKDGGADTPAAPGPKAPPTALGEAALSQSNRAAPSTAVSPPTGAAPVAGTGLRPPPPVPSAASPSPSTMAGGPTEDEEDEESESAESEKAESTAAPQVAEGGSAGEPGGTPPARAPRPETPLAASRFVPSGTVSVRKEAASPQSVAAHAPGAPAGWTCKPQKESRSWDCNLVGPDPRGVARPVGAAGEPPEDWAQAATITEYDEQRFDRLLGMMPSNPWAGTCARGKRESDAAKDFLLTSKDRLARKRAPVEVHGNYGEMDDQEVATFTGDAEVTRYDQHVKGDFLSLNTEADTVNARGSVFYREKGLAFASDTAFMRMEEDKGVLRNSQFIVETMPSRGVARVAHMDSDTHSHYETATYTTCPPGNTDWMLHADEVTIDKETGRGDASHAWMEFKGVPIFYTPYMDFPVDDRRQSGFLSPTFGQSKVNGFNLSVPYYFNLAPDYDLTLQAREMTSRGPLFGGDFRWLTEHQRIRLLGEVIPEDSQTKTTRGQAGFDAMGRWTDSLFTLVDLNYVSDSKYLNQLNNTLGLVSNTFVQSQAYADYTYSNGSVRLLGDYYQNIDPSIPTEQTPYYRLPSLRGNYNEQIGDSGFRFQANAEVVNFGHGGNNVKGQRLNIRPQISYPIQSPGSFLVPSVALQNTTYMLQNQAAGTGSSLNRVAPIFSVDSGLVFDRDFELGSASLRQTLEPRVFYTYVPKINQNDYPIFDSNYYDFTYYQLFRTNRFAGADRLADMNQVTLGLTSRFIDRDTGWERLTASLGKVFFITDPSVTLVNPYGANPLGVVLGPDQGQFVYGNYNKSYANVIGKVDTRLTEAFFLGGEAQLSPYTGRFERGSVGLQYNDRQNNLMNLSYRYREPLPNQPAIEQAATIGQNTTALNNTDISFRIPFLKDWHVIGRWQYSLLYNRTLESLVGLEHETCCWRFTVLGREYLNGVNQSNAPTTNTAIFVQMELKGLTRLGDQVDRFLYRAINGYRMPNEDF.

A signal peptide spans 1-32; that stretch reads MEGPPTAAHAAAPLRTAVFLALAASWQQPAVA. Residues 50-213 form a disordered region; that stretch reads VAKRKDGGAD…APAGWTCKPQ (164 aa). Polar residues predominate over residues 78-91; it reads LSQSNRAAPSTAVS. Over residues 126 to 137 the composition is skewed to acidic residues; the sequence is TEDEEDEESESA. Pro residues predominate over residues 161–171; the sequence is GTPPARAPRPE.

The protein belongs to the LptD family. Component of the lipopolysaccharide transport and assembly complex. Interacts with LptE and LptA.

The protein localises to the cell outer membrane. Together with LptE, is involved in the assembly of lipopolysaccharide (LPS) at the surface of the outer membrane. This Methylococcus capsulatus (strain ATCC 33009 / NCIMB 11132 / Bath) protein is LPS-assembly protein LptD.